Here is a 593-residue protein sequence, read N- to C-terminus: Tyrosine-protein phosphatase non-receptor type 11 (593 aa).

Threonine 2 is subject to N-acetylthreonine. SH2 domains follow at residues 6-102 and 112-216; these read WFHP…KYPL and WFHG…KQPL. Tyrosine 62 and tyrosine 66 each carry phosphotyrosine. A Tyrosine-protein phosphatase domain is found at 247 to 517; the sequence is FWEEFETLQQ…EAQYRFIYMA (271 aa). Substrate contacts are provided by residues aspartate 425, 459 to 465, and glutamine 506; that span reads CSAGIGR. Cysteine 459 functions as the Phosphocysteine intermediate in the catalytic mechanism. 2 positions are modified to phosphotyrosine; by PDGFR: tyrosine 542 and tyrosine 580.

Belongs to the protein-tyrosine phosphatase family. Non-receptor class 2 subfamily. In terms of assembly, interacts with phosphorylated SIT1, LIME1, BCAR3 and MZPL1. Interacts with FCRL4, FCRL6, ANKHD1, SHB, INPP5D/SHIP1 and CD84. Interacts with MILR1 (tyrosine-phosphorylated). Interacts with FLT1 (tyrosine-phosphorylated), FLT3 (tyrosine-phosphorylated), FLT4 (tyrosine-phosphorylated), KIT and GRB2. Interacts with PTPNS1. Interacts with KIR2DL1; the interaction is enhanced by ARRB2. Interacts (via SH2 domain) with TEK/TIE2 (tyrosine phosphorylated). Interacts with GAB2. Interacts with TERT; the interaction retains TERT in the nucleus. Interacts with PECAM1 and FER. Interacts with EPHA2 (activated); participates in PTK2/FAK1 dephosphorylation in EPHA2 downstream signaling. Interacts with PDGFRA (tyrosine phosphorylated). Interacts with PDGFRB (tyrosine phosphorylated); this interaction increases the PTPN11 phosphatase activity. Interacts with ROS1; this mediates PTPN11 phosphorylation. Interacts with CEACAM1 (via cytoplasmic domain); this interaction depends on the monomer/dimer equilibrium and is phosphorylation-dependent. Interacts with MPIG6B (via ITIM motif). Interacts with SIGLEC10. Interacts with CLEC12B (via ITIM motif); this interaction triggers dephosphorylation and activation of PTPN11. Interacts (via SH2 domains) with NEDD9/CAS-L; the interaction is enhanced when NEDD9/CAS-L is tyrosine phosphorylated. Phosphorylated on Tyr-542 and Tyr-580 upon receptor protein tyrosine kinase activation; which creates a binding site for GRB2 and other SH2-containing proteins. Phosphorylated upon activation of the receptor-type kinase FLT3. Phosphorylated upon activation of the receptor-type kinase PDGFRA. Phosphorylated by activated PDGFRB. In terms of tissue distribution, expressed in brain, muscle and lung.

The protein resides in the cytoplasm. The enzyme catalyses O-phospho-L-tyrosyl-[protein] + H2O = L-tyrosyl-[protein] + phosphate. Its activity is regulated as follows. Inhibited by orthovanadate, molybdate and spermidine. Its function is as follows. Acts downstream of various receptor and cytoplasmic protein tyrosine kinases to participate in the signal transduction from the cell surface to the nucleus. Positively regulates MAPK signal transduction pathway. Dephosphorylates GAB1, ARHGAP35 and EGFR. Dephosphorylates ROCK2 at 'Tyr-722' resulting in stimulation of its RhoA binding activity. Dephosphorylates CDC73. Dephosphorylates SOX9 on tyrosine residues, leading to inactivate SOX9 and promote ossification. Dephosphorylates tyrosine-phosphorylated NEDD9/CAS-L. The protein is Tyrosine-protein phosphatase non-receptor type 11 (Ptpn11) of Rattus norvegicus (Rat).